The chain runs to 196 residues: Glutathione-specific gamma-glutamylcyclotransferase 1 (196 aa).

15 to 20 contacts substrate; the sequence is IFGYGS. Catalysis depends on Glu-95, which acts as the Proton acceptor.

Belongs to the gamma-glutamylcyclotransferase family. ChaC subfamily.

It is found in the cytoplasm. The protein resides in the cytosol. Its subcellular location is the golgi apparatus. The protein localises to the trans-Golgi network. The enzyme catalyses glutathione = L-cysteinylglycine + 5-oxo-L-proline. Its function is as follows. Catalyzes the cleavage of glutathione into 5-oxo-L-proline and a Cys-Gly dipeptide. Acts specifically on glutathione, but not on other gamma-glutamyl peptides. Glutathione depletion is an important factor for apoptosis initiation and execution. Acts as a pro-apoptotic component of the unfolded protein response pathway by mediating the pro-apoptotic effects of the ATF4-ATF3-DDIT3/CHOP cascade. Negative regulator of Notch signaling pathway involved in embryonic neurogenesis: acts by inhibiting Notch cleavage by furin, maintaining Notch in an immature inactive form, thereby promoting neurogenesis in embryos. This chain is Glutathione-specific gamma-glutamylcyclotransferase 1, found in Danio rerio (Zebrafish).